The sequence spans 152 residues: UPF0260 protein BAB1_1496 (152 aa).

Belongs to the UPF0260 family.

The chain is UPF0260 protein BAB1_1496 from Brucella abortus (strain 2308).